A 208-amino-acid chain; its full sequence is V-type ATP synthase subunit E (208 aa).

The protein belongs to the V-ATPase E subunit family.

Functionally, produces ATP from ADP in the presence of a proton gradient across the membrane. This Chlamydia trachomatis serovar A (strain ATCC VR-571B / DSM 19440 / HAR-13) protein is V-type ATP synthase subunit E.